A 201-amino-acid chain; its full sequence is 3-mercaptopropionate dioxygenase (201 aa).

H89, H91, and H142 together coordinate Fe cation.

It belongs to the cysteine dioxygenase family. Forms homodimer in the crystal; however, there is no evidence that the dimer exists under physiological conditions or has biological significance. The cofactor is Fe(2+).

The catalysed reaction is 3-sulfanylpropanoate + O2 = 3-sulfinopropanoate + H(+). Thiol dioxygenase that catalyzes the dioxygenation of 3-mercaptopropionate (3-MPA) to 3-sulfinopropionate (3-SPA). To a lesser extent (40-fold lower efficiency), is also able to oxidize cysteine to cysteine sulfinate (CSA). Cannot use N-acetyl-L-cysteine, homocysteine, and cysteamine as substrates. The physiological role of this enzyme is unclear. The sequence is that of 3-mercaptopropionate dioxygenase from Pseudomonas aeruginosa (strain ATCC 15692 / DSM 22644 / CIP 104116 / JCM 14847 / LMG 12228 / 1C / PRS 101 / PAO1).